A 410-amino-acid chain; its full sequence is Peptidase T (410 aa).

His-79 is a binding site for Zn(2+). Asp-81 is a catalytic residue. Asp-142 lines the Zn(2+) pocket. The active-site Proton acceptor is Glu-176. 3 residues coordinate Zn(2+): Glu-177, Asp-199, and His-381.

Belongs to the peptidase M20B family. The cofactor is Zn(2+).

It is found in the cytoplasm. The enzyme catalyses Release of the N-terminal residue from a tripeptide.. Functionally, cleaves the N-terminal amino acid of tripeptides. The protein is Peptidase T of Listeria monocytogenes serotype 4b (strain F2365).